Reading from the N-terminus, the 540-residue chain is 2-isopropylmalate synthase (540 aa).

Residues 8–273 (VLIFDTTLRD…FFGRDEDSPT (266 aa)) enclose the Pyruvate carboxyltransferase domain. The Mn(2+) site is built by Asp17, His208, His210, and Asn244. The interval 408-540 (QLKLVQVSCG…MAQLDSSPVH (133 aa)) is regulatory domain.

The protein belongs to the alpha-IPM synthase/homocitrate synthase family. LeuA type 1 subfamily. In terms of assembly, homodimer. Requires Mn(2+) as cofactor.

It localises to the cytoplasm. The catalysed reaction is 3-methyl-2-oxobutanoate + acetyl-CoA + H2O = (2S)-2-isopropylmalate + CoA + H(+). The protein operates within amino-acid biosynthesis; L-leucine biosynthesis; L-leucine from 3-methyl-2-oxobutanoate: step 1/4. Its function is as follows. Catalyzes the condensation of the acetyl group of acetyl-CoA with 3-methyl-2-oxobutanoate (2-ketoisovalerate) to form 3-carboxy-3-hydroxy-4-methylpentanoate (2-isopropylmalate). The chain is 2-isopropylmalate synthase from Synechococcus sp. (strain CC9311).